The chain runs to 783 residues: Protein DWD HYPERSENSITIVE TO UV-B 1 (783 aa).

WD repeat units follow at residues 145–198 (GEFT…LKLP) and 212–256 (SDSS…DPSL). The short motif at 382–389 (RKKESVVR) is the Nuclear localization signal element. WD repeat units follow at residues 439-480 (DNSR…IFRY), 485-525 (GSQS…STVT), 538-577 (DEFD…RLQV), 581-621 (MHQE…SRPC), 625-664 (SSTK…LHLN), and 666-710 (EIVP…RRLR).

In terms of assembly, interacts directly with DDB1A. Binds to COP1 and RUP1.

The protein localises to the nucleus. In terms of biological role, may act as a substrate receptor of a CUL4-RING E3 ubiquitin-protein ligase (CRL4) complex involved in the negative regulation of cellular responses to ultraviolet-B (UV-B) illumination, likely in coordination with RUP1. Interacts with COP1 and probably prevents the formation of active UVR8-COP1 complex, thus avoiding UVR8-COP1-mediated positive regulation of UV-B responses. This Arabidopsis thaliana (Mouse-ear cress) protein is Protein DWD HYPERSENSITIVE TO UV-B 1.